A 147-amino-acid polypeptide reads, in one-letter code: Nucleoside diphosphate kinase (147 aa).

ATP-binding residues include Lys-9, Phe-57, Arg-85, Thr-91, Arg-102, and Asn-112. The active-site Pros-phosphohistidine intermediate is the His-115.

The protein belongs to the NDK family. Homotetramer. Mg(2+) is required as a cofactor.

The protein resides in the cytoplasm. It catalyses the reaction a 2'-deoxyribonucleoside 5'-diphosphate + ATP = a 2'-deoxyribonucleoside 5'-triphosphate + ADP. The enzyme catalyses a ribonucleoside 5'-diphosphate + ATP = a ribonucleoside 5'-triphosphate + ADP. In terms of biological role, major role in the synthesis of nucleoside triphosphates other than ATP. The ATP gamma phosphate is transferred to the NDP beta phosphate via a ping-pong mechanism, using a phosphorylated active-site intermediate. This is Nucleoside diphosphate kinase from Thermosipho melanesiensis (strain DSM 12029 / CIP 104789 / BI429).